Reading from the N-terminus, the 251-residue chain is Pyridoxine 5'-phosphate synthase (251 aa).

Residues Asn-8 and Arg-19 each contribute to the 3-amino-2-oxopropyl phosphate site. His-44 (proton acceptor) is an active-site residue. Residues Arg-46 and His-51 each contribute to the 1-deoxy-D-xylulose 5-phosphate site. Catalysis depends on Glu-76, which acts as the Proton acceptor. Thr-106 serves as a coordination point for 1-deoxy-D-xylulose 5-phosphate. His-200 (proton donor) is an active-site residue. Residues Asp-201 and 223–224 (GH) each bind 3-amino-2-oxopropyl phosphate.

It belongs to the PNP synthase family. As to quaternary structure, homooctamer; tetramer of dimers.

The protein resides in the cytoplasm. The enzyme catalyses 3-amino-2-oxopropyl phosphate + 1-deoxy-D-xylulose 5-phosphate = pyridoxine 5'-phosphate + phosphate + 2 H2O + H(+). The protein operates within cofactor biosynthesis; pyridoxine 5'-phosphate biosynthesis; pyridoxine 5'-phosphate from D-erythrose 4-phosphate: step 5/5. Catalyzes the complicated ring closure reaction between the two acyclic compounds 1-deoxy-D-xylulose-5-phosphate (DXP) and 3-amino-2-oxopropyl phosphate (1-amino-acetone-3-phosphate or AAP) to form pyridoxine 5'-phosphate (PNP) and inorganic phosphate. This Agrobacterium fabrum (strain C58 / ATCC 33970) (Agrobacterium tumefaciens (strain C58)) protein is Pyridoxine 5'-phosphate synthase.